Reading from the N-terminus, the 206-residue chain is MKLLLASNNAKKLKELQRILDQAGLDSVELLALRDVEAYDEPIEDGRTFADNAQIKARAGVTHTGIATIADDSGIAVEELNGMPGVLSARWSGAHGNDTANNELLLAQMEHVPDERRNAAFVSVCVLALPDGQEFVQEGRWEGQLLRGPKGENGFGYDPLFIPAEEIDGQGRSSAELSAEEKDALSHRGQALRGLVEKIAQVAAAS.

7–12 (SNNAKK) provides a ligand contact to substrate. The Proton acceptor role is filled by aspartate 72. Aspartate 72 lines the Mg(2+) pocket. Residues serine 73, 155-158 (FGYD), lysine 182, and 187-188 (HR) contribute to the substrate site.

This sequence belongs to the HAM1 NTPase family. As to quaternary structure, homodimer. Requires Mg(2+) as cofactor.

It carries out the reaction XTP + H2O = XMP + diphosphate + H(+). It catalyses the reaction dITP + H2O = dIMP + diphosphate + H(+). The catalysed reaction is ITP + H2O = IMP + diphosphate + H(+). In terms of biological role, pyrophosphatase that catalyzes the hydrolysis of nucleoside triphosphates to their monophosphate derivatives, with a high preference for the non-canonical purine nucleotides XTP (xanthosine triphosphate), dITP (deoxyinosine triphosphate) and ITP. Seems to function as a house-cleaning enzyme that removes non-canonical purine nucleotides from the nucleotide pool, thus preventing their incorporation into DNA/RNA and avoiding chromosomal lesions. The chain is dITP/XTP pyrophosphatase from Corynebacterium glutamicum (strain ATCC 13032 / DSM 20300 / JCM 1318 / BCRC 11384 / CCUG 27702 / LMG 3730 / NBRC 12168 / NCIMB 10025 / NRRL B-2784 / 534).